The following is a 518-amino-acid chain: Arrestin-related trafficking adapter 10 (518 aa).

A Glycyl lysine isopeptide (Lys-Gly) (interchain with G-Cter in ubiquitin) cross-link involves residue K118.

This sequence belongs to the ART10 family. As to quaternary structure, interacts with RSP5. Ubiquitinated by RSP5.

It localises to the cytoplasm. Its function is as follows. May regulate endocytosis by recruiting RSP5 ubiquitin ligase activity to specific plasma membrane proteins in response to extracellular stimuli. The chain is Arrestin-related trafficking adapter 10 (ART10) from Saccharomyces cerevisiae (strain ATCC 204508 / S288c) (Baker's yeast).